The chain runs to 525 residues: MRFLRFLKIFFTVIRFGLDEMMLSRVNDRRVRLLLRITTIGRKFDAPPGVRLRLALESLGPIFVKFGQVLSTRRDLLPVDIADELAKLQDQVPPFESAVAIRLVENALGAPVDVLFDDFERVPVASASIAQVHFATVKAGQHAGKAVAVKVLRPNMLPVIDSDLALLRDIAVWAERLWADGKRLKPREVVAEFDKYLHDELDLMREAANGSQLRRNFAGLDLLLVPEMYWEFCTPTVLVMERMVGVPISQVETLRAAGVDIPKLAREGVEIFFTQVFRDGFFHADMHPGNIQVSLDPAHFGRYIALDFGIIGALSDFDKNYLAQNFLAFFKRDYHRVATLHLESGWVPPTTRVEELESAIRAVCEPYFDRALKDISLGQVLMRLFSTSRRFNVEIQPQLVLLQKTMLNVEGLGRSLDPELDLWKTAKPYLERWMNEQIGLRGWYERLKIEAPQWSKTLPQLPRLIHHALAERHDNKRGANDDMIRQILLEQKRTNRLLQGLLLFGVAVGVGAVLARAFLALAYGG.

One can recognise a Protein kinase domain in the interval 118 to 500 (DFERVPVASA…QKRTNRLLQG (383 aa)). ATP contacts are provided by residues 124–132 (VASASIAQV) and Lys-150. Asp-285 serves as the catalytic Proton acceptor. A helical membrane pass occupies residues 501–521 (LLLFGVAVGVGAVLARAFLAL).

This sequence belongs to the ABC1 family. UbiB subfamily.

The protein localises to the cell inner membrane. It functions in the pathway cofactor biosynthesis; ubiquinone biosynthesis [regulation]. Is probably a protein kinase regulator of UbiI activity which is involved in aerobic coenzyme Q (ubiquinone) biosynthesis. The protein is Probable protein kinase UbiB of Paraburkholderia phytofirmans (strain DSM 17436 / LMG 22146 / PsJN) (Burkholderia phytofirmans).